The primary structure comprises 49 residues: Large ribosomal subunit protein bL33B (49 aa).

This sequence belongs to the bacterial ribosomal protein bL33 family.

This Staphylococcus saprophyticus subsp. saprophyticus (strain ATCC 15305 / DSM 20229 / NCIMB 8711 / NCTC 7292 / S-41) protein is Large ribosomal subunit protein bL33B.